Here is a 448-residue protein sequence, read N- to C-terminus: Chromosomal replication initiator protein DnaA (448 aa).

The interval Met1–Ile72 is domain I, interacts with DnaA modulators. The tract at residues Ile72–Thr110 is domain II. A domain III, AAA+ region region spans residues His111–Ala327. ATP-binding residues include Gly155, Gly157, Lys158, and Thr159. A domain IV, binds dsDNA region spans residues Thr328–Ser448.

This sequence belongs to the DnaA family. As to quaternary structure, oligomerizes as a right-handed, spiral filament on DNA at oriC.

Its subcellular location is the cytoplasm. In terms of biological role, plays an essential role in the initiation and regulation of chromosomal replication. ATP-DnaA binds to the origin of replication (oriC) to initiate formation of the DNA replication initiation complex once per cell cycle. Binds the DnaA box (a 9 base pair repeat at the origin) and separates the double-stranded (ds)DNA. Forms a right-handed helical filament on oriC DNA; dsDNA binds to the exterior of the filament while single-stranded (ss)DNA is stabiized in the filament's interior. The ATP-DnaA-oriC complex binds and stabilizes one strand of the AT-rich DNA unwinding element (DUE), permitting loading of DNA polymerase. After initiation quickly degrades to an ADP-DnaA complex that is not apt for DNA replication. Binds acidic phospholipids. The protein is Chromosomal replication initiator protein DnaA of Latilactobacillus sakei subsp. sakei (strain 23K) (Lactobacillus sakei subsp. sakei).